The sequence spans 72 residues: UPF0270 protein YheU (72 aa).

The protein belongs to the UPF0270 family.

The protein is UPF0270 protein YheU of Shigella dysenteriae serotype 1 (strain Sd197).